A 379-amino-acid chain; its full sequence is Cyclic dinucleotide synthase CdnE (379 aa).

Gln107, Ser109, Asp123, and Lys179 together coordinate UTP. Asp123 provides a ligand contact to Mg(2+). Residue Asp193 coordinates Mg(2+). 3 residues coordinate UTP: Asn229, Lys257, and Ser274. A Pyrimidine specificity motif (R/Q)xW in donor pocket motif is present at residues 328 to 330 (KIF).

This sequence belongs to the CD-NTase family. E02 subfamily. Mg(2+) is required as a cofactor.

It catalyses the reaction 2 UTP = c-di-UMP + 2 diphosphate. It carries out the reaction UTP + ATP = 3',3'-cUAMP + 2 diphosphate. The enzyme catalyses UTP + CTP = cyclic CMP-UMP + 2 diphosphate. In terms of biological role, cyclic nucleotide synthase (second messenger synthase) of a CBASS antivirus system. CBASS (cyclic oligonucleotide-based antiphage signaling system) provides immunity against bacteriophage. The CD-NTase protein synthesizes cyclic nucleotides in response to infection; these serve as specific second messenger signals. The signals activate a diverse range of effectors, leading to bacterial cell death and thus abortive phage infection. The effector protein for this system is membrane protein Cap15. A type I-B(UU) CBASS system. Its function is as follows. Cyclic dinucleotide synthase that preferentially catalyzes the synthesis of 3',3'-cyclic UMP-UMP (c-di-UMP) and 3',3'-cyclic UMP-AMP, with minor amounts of 3',3'-cyclic UMP-CMP, which are second messengers for cell signal transduction. Functionally, protects E.coli against phage infection. When the CBASS operon (cap15-cdnE) is introduced in E.coli MG1655 it protects against phages T2, T4, T5, T6, SECPhi4, SECPhi6, SECPhi17, SECPhi18 and SECPhi27, but not against phage T7. The chain is Cyclic dinucleotide synthase CdnE from Yersinia aleksiciae.